Reading from the N-terminus, the 551-residue chain is Solute carrier family 22 member 4 (551 aa).

The Cytoplasmic segment spans residues 1–20 (MRDYDEAIAFLGEWGPFQRL). Residues 21–41 (IFFLLSASIIPNGFNGMSVVF) traverse the membrane as a helical segment. Residues 42-141 (LAGTPEHRCR…WNLVCEDNWK (100 aa)) are Extracellular-facing. Residues N57, N64, and N91 are each glycosylated (N-linked (GlcNAc...) asparagine). A helical transmembrane segment spans residues 142-162 (VPLTTSLFFVGVLLGSFVSGQ). At 163–171 (LSDRFGRKN) the chain is on the cytoplasmic side. The chain crosses the membrane as a helical span at residues 172 to 192 (VLFATMAVQTGFSFLQIFSIS). At 193-197 (WEMFT) the chain is on the extracellular side. A helical transmembrane segment spans residues 198–218 (VLFLIVGMGQISNYVVAFILG). 218–225 (GTEILGKS) contributes to the ATP binding site. The Cytoplasmic portion of the chain corresponds to 219 to 232 (TEILGKSVRIIFST). A helical transmembrane segment spans residues 233 to 253 (LGVCTFFAVGYMLLPLFAYFI). Over 254–257 (RDWR) the chain is Extracellular. Residues 258–278 (MLLLALTVPGVLCVPLWWFIP) traverse the membrane as a helical segment. Residues 279 to 337 (ESPRWLISQRRFREAEDIIQKAAKMNNIAVPAVIFDSVEELNPLKQQKAFILDLFRTWN) are Cytoplasmic-facing. The helical transmembrane segment at 338–358 (IAIMTIMSLLLWMLTSVGYFA) threads the bilayer. The Extracellular portion of the chain corresponds to 359-371 (LSLDTPNLHGDAY). A helical membrane pass occupies residues 372-392 (LNCFLSALIEIPAYITAWLLL). At 393 to 399 (RTLPRRY) the chain is on the cytoplasmic side. Residues 400-420 (IIAAVLFWGGGVLLFIQLVPV) traverse the membrane as a helical segment. Over 421–426 (DYYFLS) the chain is Extracellular. A helical membrane pass occupies residues 427–447 (IGLVMLGKFGITSAFSMLYVF). Topologically, residues 448-460 (TAELYPTMVRNMA) are cytoplasmic. A helical transmembrane segment spans residues 461–481 (VGVTSMASRVGSIIAPYFVYL). The Extracellular segment spans residues 482 to 486 (GAYNR). Residues 487–507 (MLPYIVMGSLTVLIGILTLFF) form a helical membrane-spanning segment. The Cytoplasmic segment spans residues 508 to 551 (PESLGMTLPETLEQMQKVKWFRSGKKTRDSMETEENPKVLITAF).

Belongs to the major facilitator (TC 2.A.1) superfamily. Organic cation transporter (TC 2.A.1.19) family. In terms of assembly, interacts with PDZK1.

The protein resides in the apical cell membrane. Its subcellular location is the basal cell membrane. It is found in the mitochondrion membrane. It carries out the reaction ergothioneine(out) + Na(+)(out) = ergothioneine(in) + Na(+)(in). The enzyme catalyses acetylcholine(in) = acetylcholine(out). It catalyses the reaction (R)-carnitine(out) + Na(+)(out) = (R)-carnitine(in) + Na(+)(in). The catalysed reaction is glycine betaine(out) + Na(+)(out) = glycine betaine(in) + Na(+)(in). With respect to regulation, allosterically activated by intracellular ATP. Transporter that mediates the transport of endogenous and microbial zwitterions and organic cations. Functions as a Na(+)-dependent and pH-dependent high affinity microbial symporter of potent food-derived antioxidant ergothioeine. Transports one sodium ion with one ergothioeine molecule. Involved in the absorption of ergothioneine from the luminal/apical side of the small intestine and renal tubular cells, and into non-parenchymal liver cells, thereby contributing to maintain steady-state ergothioneine level in the body. Also mediates the bidirectional transport of acetycholine, although the exact transport mechanism has not been fully identified yet. Most likely exports anti-inflammatory acetylcholine in non-neuronal tissues, thereby contributing to the non-neuronal cholinergic system. Displays a general physiological role linked to better survival by controlling inflammation and oxidative stress, which may be related to ergothioneine and acetycholine transports. May also function as a low-affinity Na(+)-dependent transporter of L-carnitine through the mitochondrial membrane, thereby maintaining intracellular carnitine homeostasis. May contribute to regulate the transport of cationic compounds in testis across the blood-testis-barrier. This is Solute carrier family 22 member 4 (SLC22A4) from Papio anubis (Olive baboon).